The sequence spans 249 residues: Phosphonates import ATP-binding protein PhnC (249 aa).

The ABC transporter domain maps to 2–246 (IEFKKVEKVW…KLNESKLEEI (245 aa)). Residue 35–42 (GLSGAGKT) coordinates ATP.

This sequence belongs to the ABC transporter superfamily. Phosphonates importer (TC 3.A.1.9.1) family. In terms of assembly, the complex is composed of two ATP-binding proteins (PhnC), two transmembrane proteins (PhnE) and a solute-binding protein (PhnD).

The protein resides in the cell membrane. It catalyses the reaction phosphonate(out) + ATP + H2O = phosphonate(in) + ADP + phosphate + H(+). In terms of biological role, part of the ABC transporter complex PhnCDE involved in phosphonates import. Responsible for energy coupling to the transport system. The protein is Phosphonates import ATP-binding protein PhnC of Mesoplasma florum (strain ATCC 33453 / NBRC 100688 / NCTC 11704 / L1) (Acholeplasma florum).